The following is a 221-amino-acid chain: Dynein light chain Tctex-type 4 (221 aa).

Disordered regions lie at residues 1 to 52 and 65 to 87; these read MASR…SRRG and NSLV…VPPL. A compositionally biased stretch (basic and acidic residues) spans 10–21; sequence RQEEENAKDSGR. S66 is modified (phosphoserine).

This sequence belongs to the dynein light chain Tctex-type family. In terms of assembly, interacts with ENG/endoglin, TGFBR2 and TGFBR3. Interacts with PPP1CC. As to expression, ubiquitously expressed. Expressed in testis (at protein level).

The protein localises to the cell projection. It localises to the cilium. Its subcellular location is the flagellum. It is found in the cytoplasmic vesicle. The protein resides in the secretory vesicle. The protein localises to the acrosome. It localises to the cytoplasm. Its subcellular location is the cytoskeleton. It is found in the cilium axoneme. The protein resides in the nucleus. The protein localises to the microtubule organizing center. In Homo sapiens (Human), this protein is Dynein light chain Tctex-type 4.